We begin with the raw amino-acid sequence, 68 residues long: Large ribosomal subunit protein bL32 (68 aa).

A disordered region spans residues 1-24; that stretch reads MAVPQNRVTRSRRNMRRSHDALVA.

It belongs to the bacterial ribosomal protein bL32 family.

The chain is Large ribosomal subunit protein bL32 from Paracoccus denitrificans (strain Pd 1222).